Consider the following 958-residue polypeptide: Glycine dehydrogenase (decarboxylating) (958 aa).

The residue at position 708 (lysine 708) is an N6-(pyridoxal phosphate)lysine.

It belongs to the GcvP family. In terms of assembly, the glycine cleavage system is composed of four proteins: P, T, L and H. Requires pyridoxal 5'-phosphate as cofactor.

The enzyme catalyses N(6)-[(R)-lipoyl]-L-lysyl-[glycine-cleavage complex H protein] + glycine + H(+) = N(6)-[(R)-S(8)-aminomethyldihydrolipoyl]-L-lysyl-[glycine-cleavage complex H protein] + CO2. In terms of biological role, the glycine cleavage system catalyzes the degradation of glycine. The P protein binds the alpha-amino group of glycine through its pyridoxal phosphate cofactor; CO(2) is released and the remaining methylamine moiety is then transferred to the lipoamide cofactor of the H protein. This chain is Glycine dehydrogenase (decarboxylating), found in Proteus mirabilis (strain HI4320).